We begin with the raw amino-acid sequence, 496 residues long: Sporulation-killing factor biosynthesis protein SkfC (496 aa).

Helical transmembrane passes span 1 to 21 (MNSL…LLFI), 224 to 244 (VSGM…LVFM), 248 to 268 (TSII…SLTL), 291 to 311 (LLGI…VFIC), 331 to 351 (IVQI…TSLL), 399 to 419 (LLMI…IIVS), and 443 to 463 (FIFG…CVLV).

The protein resides in the membrane. Functionally, required for production of the bacteriocin SkfA. The protein is Sporulation-killing factor biosynthesis protein SkfC of Bacillus subtilis (strain 168).